Reading from the N-terminus, the 417-residue chain is Actin-related protein 10 (417 aa).

It belongs to the actin family. As to quaternary structure, subunit of dynactin, a multiprotein complex part of a tripartite complex with dynein and a adapter, such as BICDL1, BICD2 or HOOK3. The dynactin complex is built around ACTR1A/ACTB filament and consists of an actin-related filament composed of a shoulder domain, a pointed end and a barbed end. Its length is defined by its flexible shoulder domain. The soulder is composed of 2 DCTN1 subunits, 4 DCTN2 and 2 DCTN3. The 4 DCNT2 (via N-terminus) bind the ACTR1A filament and act as molecular rulers to determine the length. The pointed end is important for binding dynein-dynactin cargo adapters. Consists of 4 subunits: ACTR10, DCNT4, DCTN5 and DCTN6. The barbed end is composed of a CAPZA1:CAPZB heterodimers, which binds ACTR1A/ACTB filament and dynactin and stabilizes dynactin.

The protein localises to the cytoplasm. The protein resides in the cytoskeleton. Its function is as follows. Part of the dynactin complex that activates the molecular motor dynein for ultra-processive transport along microtubules. The chain is Actin-related protein 10 (ACTR10) from Homo sapiens (Human).